The following is a 585-amino-acid chain: Folylpolyglutamate synthase, mitochondrial (585 aa).

The transit peptide at 1-39 (MSRARCHALFLAAVSPRGATTRVAVRRGLSAWPVLQEPD) directs the protein to the mitochondrion. 103 to 106 (GKGS) provides a ligand contact to ATP. 3 residues coordinate Mg(2+): Ser127, Glu198, and His226. Residues Arg361 and Asp375 each contribute to the ATP site. The segment at 477–497 (EEQVSPDPWSTPGQEQDGPAS) is disordered. Phosphoserine is present on Ser537.

It belongs to the folylpolyglutamate synthase family. As to quaternary structure, monomer. It depends on a monovalent cation as a cofactor.

Its subcellular location is the mitochondrion inner membrane. It localises to the mitochondrion matrix. The protein resides in the cytoplasm. The enzyme catalyses (6S)-5,6,7,8-tetrahydrofolyl-(gamma-L-Glu)(n) + L-glutamate + ATP = (6S)-5,6,7,8-tetrahydrofolyl-(gamma-L-Glu)(n+1) + ADP + phosphate + H(+). It participates in cofactor biosynthesis; tetrahydrofolylpolyglutamate biosynthesis. Catalyzes conversion of folates to polyglutamate derivatives allowing concentration of folate compounds in the cell and the intracellular retention of these cofactors, which are important substrates for most of the folate-dependent enzymes that are involved in one-carbon transfer reactions involved in purine, pyrimidine and amino acid synthesis. The sequence is that of Folylpolyglutamate synthase, mitochondrial (FPGS) from Bos taurus (Bovine).